The following is a 486-amino-acid chain: tRNA-2-methylthio-N(6)-dimethylallyladenosine synthase (486 aa).

Residues 35 to 151 form the MTTase N-terminal domain; sequence RNLYVESYGC…LPRLLATVDS (117 aa). 6 residues coordinate [4Fe-4S] cluster: Cys-44, Cys-80, Cys-114, Cys-189, Cys-193, and Cys-196. The Radical SAM core domain occupies 175–419; it reads NSNGVSAFIS…IDKQRQHSFE (245 aa). The region spanning 422–485 is the TRAM domain; it reads LKDIGKVYQV…TGTLLGEICT (64 aa).

The protein belongs to the methylthiotransferase family. MiaB subfamily. In terms of assembly, monomer. [4Fe-4S] cluster is required as a cofactor.

Its subcellular location is the cytoplasm. It catalyses the reaction N(6)-dimethylallyladenosine(37) in tRNA + (sulfur carrier)-SH + AH2 + 2 S-adenosyl-L-methionine = 2-methylsulfanyl-N(6)-dimethylallyladenosine(37) in tRNA + (sulfur carrier)-H + 5'-deoxyadenosine + L-methionine + A + S-adenosyl-L-homocysteine + 2 H(+). Its function is as follows. Catalyzes the methylthiolation of N6-(dimethylallyl)adenosine (i(6)A), leading to the formation of 2-methylthio-N6-(dimethylallyl)adenosine (ms(2)i(6)A) at position 37 in tRNAs that read codons beginning with uridine. In Amoebophilus asiaticus (strain 5a2), this protein is tRNA-2-methylthio-N(6)-dimethylallyladenosine synthase.